We begin with the raw amino-acid sequence, 153 residues long: Calmodulin-like protein 3 (153 aa).

4 consecutive EF-hand domains span residues 1 to 36, 37 to 72, 74 to 109, and 112 to 147; these read MDQAELARIFQMFDRNGDGKITKQELNDSLENLGIY, IPDKDLVQMIEKIDLNGDGYVDIEEFGGLYQTIMEE, DEEEDMREAFNVFDQNRDGFITVEELRSVLASLGLK, and RTLEDCKRMISKVDVDGDGMVNFKEFKQMMKGGGFA. 19 residues coordinate Ca(2+): Asp14, Asn16, Asp18, Lys20, Glu25, Asp50, Asn52, Asp54, Tyr56, Glu61, Asp87, Asn89, Asp91, Glu98, Asp125, Asp127, Asp129, Met131, and Glu136.

It belongs to the calmodulin family.

Potential calcium sensor. The chain is Calmodulin-like protein 3 (CML3) from Arabidopsis thaliana (Mouse-ear cress).